We begin with the raw amino-acid sequence, 307 residues long: Capsid assembly scaffolding protein (307 aa).

2 stretches are compositionally biased toward acidic residues: residues I45–T54 and E83–E101. A disordered region spans residues I45–P105.

It belongs to the T7likevirus capsid assembly scaffolding protein family.

Its function is as follows. Scaffolding protein involved in the icosahedric procapsid assembly. Coassembles with the capsid proteins to form the procapsid, in which the scaffolding protein is found within the external shell of icosahedrally arranged capsid protein subunits. In a subsequent step the scaffolding protein molecules are released from the procapsid. Facilitates assembly by binding to gp10 hexamers but not the pentamers and locking them into a morphogenically correct conformation. The chain is Capsid assembly scaffolding protein from Escherichia coli (Bacteriophage T7).